The sequence spans 1150 residues: ATP-dependent helicase/deoxyribonuclease subunit B (1150 aa).

An ATP-binding site is contributed by 8–15 (GRSGSGKS). [4Fe-4S] cluster-binding residues include Cys-789, Cys-1108, Cys-1111, and Cys-1117.

Belongs to the helicase family. AddB/RexB type 1 subfamily. Heterodimer of AddA and AddB. Requires Mg(2+) as cofactor. [4Fe-4S] cluster serves as cofactor.

Its function is as follows. The heterodimer acts as both an ATP-dependent DNA helicase and an ATP-dependent, dual-direction single-stranded exonuclease. Recognizes the chi site generating a DNA molecule suitable for the initiation of homologous recombination. The AddB subunit has 5' -&gt; 3' nuclease activity but not helicase activity. This chain is ATP-dependent helicase/deoxyribonuclease subunit B, found in Clostridium tetani (strain Massachusetts / E88).